We begin with the raw amino-acid sequence, 159 residues long: Small ribosomal subunit protein uS7m (159 aa).

This sequence belongs to the universal ribosomal protein uS7 family. In terms of assembly, part of the small ribosomal subunit.

Its subcellular location is the mitochondrion. In terms of biological role, one of the primary rRNA binding proteins, it binds directly to the small rRNA where it nucleates assembly of the head domain of the small subunit. The polypeptide is Small ribosomal subunit protein uS7m (RPS7) (Reclinomonas americana).